A 385-amino-acid chain; its full sequence is Protein-glutamate methylesterase/protein-glutamine glutaminase (385 aa).

The Response regulatory domain maps to 20 to 138 (RVMIVDDSVV…EASAADIFKH (119 aa)). D71 is subject to 4-aspartylphosphate. The 195-residue stretch at 189 to 383 (GVTAPRVLLI…PKLVRLFSGD (195 aa)) folds into the CheB-type methylesterase domain. Active-site residues include S201, H229, and D325.

It belongs to the CheB family. Phosphorylated by CheA. Phosphorylation of the N-terminal regulatory domain activates the methylesterase activity.

It is found in the cytoplasm. It catalyses the reaction [protein]-L-glutamate 5-O-methyl ester + H2O = L-glutamyl-[protein] + methanol + H(+). The enzyme catalyses L-glutaminyl-[protein] + H2O = L-glutamyl-[protein] + NH4(+). Involved in chemotaxis. Part of a chemotaxis signal transduction system that modulates chemotaxis in response to various stimuli. Catalyzes the demethylation of specific methylglutamate residues introduced into the chemoreceptors (methyl-accepting chemotaxis proteins or MCP) by CheR. Also mediates the irreversible deamidation of specific glutamine residues to glutamic acid. This is Protein-glutamate methylesterase/protein-glutamine glutaminase from Rhodopseudomonas palustris (strain BisB5).